A 137-amino-acid polypeptide reads, in one-letter code: Large ribosomal subunit protein uL16 (137 aa).

Belongs to the universal ribosomal protein uL16 family. Part of the 50S ribosomal subunit.

Functionally, binds 23S rRNA and is also seen to make contacts with the A and possibly P site tRNAs. In Francisella tularensis subsp. holarctica (strain FTNF002-00 / FTA), this protein is Large ribosomal subunit protein uL16.